A 422-amino-acid polypeptide reads, in one-letter code: 4-hydroxy-3-methylbut-2-en-1-yl diphosphate synthase (flavodoxin) (422 aa).

[4Fe-4S] cluster contacts are provided by C316, C319, C362, and E369.

This sequence belongs to the IspG family. It depends on [4Fe-4S] cluster as a cofactor.

It carries out the reaction (2E)-4-hydroxy-3-methylbut-2-enyl diphosphate + oxidized [flavodoxin] + H2O + 2 H(+) = 2-C-methyl-D-erythritol 2,4-cyclic diphosphate + reduced [flavodoxin]. Its pathway is isoprenoid biosynthesis; isopentenyl diphosphate biosynthesis via DXP pathway; isopentenyl diphosphate from 1-deoxy-D-xylulose 5-phosphate: step 5/6. In terms of biological role, converts 2C-methyl-D-erythritol 2,4-cyclodiphosphate (ME-2,4cPP) into 1-hydroxy-2-methyl-2-(E)-butenyl 4-diphosphate. The chain is 4-hydroxy-3-methylbut-2-en-1-yl diphosphate synthase (flavodoxin) from Ehrlichia ruminantium (strain Welgevonden).